The chain runs to 289 residues: ATP synthase mitochondrial F1 complex assembly factor 2 (289 aa).

The transit peptide at 1-40 directs the protein to the mitochondrion; that stretch reads MWRRCLRLRDVGRRLLNLPRSGLTASEGLGPKLPTPIRAY. Lys-133 bears the N6-succinyllysine mark.

This sequence belongs to the ATP12 family. As to quaternary structure, interacts with ATP5F1B; involved in the assembly of the F1 component of the mitochondrial ATP synthase (ATPase). Interacts with FMC1.

The protein resides in the mitochondrion inner membrane. Its function is as follows. Plays a role in the assembly of the F1 component of the mitochondrial ATP synthase (ATPase). This chain is ATP synthase mitochondrial F1 complex assembly factor 2 (ATPAF2), found in Bos taurus (Bovine).